We begin with the raw amino-acid sequence, 158 residues long: MLSPKRVKFRKQQRGRMRGVATRGNTIAFGEFALQAQECGWITSRQIEASRRAMTRYVKRGGKIWIRIFPDKPVTMRPAETRMGSGKGNPEFWVAVIKPGRILFEMGGAEITEDIAKEAMRLAQYKLPIKTKFIGLDDQEKVAGSDKPASVPAITAES.

The protein belongs to the universal ribosomal protein uL16 family. In terms of assembly, part of the 50S ribosomal subunit.

In terms of biological role, binds 23S rRNA and is also seen to make contacts with the A and possibly P site tRNAs. This chain is Large ribosomal subunit protein uL16, found in Prochlorococcus marinus (strain MIT 9313).